The sequence spans 120 residues: uncharacterized protein (120 aa).

The first 16 residues, 1 to 16, serve as a signal peptide directing secretion; sequence MFKFILLCFCINFAFS.

This is an uncharacterized protein from Acheta domesticus (House cricket).